The sequence spans 194 residues: 3-isopropylmalate dehydratase small subunit (194 aa).

Belongs to the LeuD family. LeuD type 1 subfamily. In terms of assembly, heterodimer of LeuC and LeuD.

It carries out the reaction (2R,3S)-3-isopropylmalate = (2S)-2-isopropylmalate. The protein operates within amino-acid biosynthesis; L-leucine biosynthesis; L-leucine from 3-methyl-2-oxobutanoate: step 2/4. Functionally, catalyzes the isomerization between 2-isopropylmalate and 3-isopropylmalate, via the formation of 2-isopropylmaleate. The chain is 3-isopropylmalate dehydratase small subunit from Leuconostoc mesenteroides subsp. mesenteroides (strain ATCC 8293 / DSM 20343 / BCRC 11652 / CCM 1803 / JCM 6124 / NCDO 523 / NBRC 100496 / NCIMB 8023 / NCTC 12954 / NRRL B-1118 / 37Y).